Here is a 351-residue protein sequence, read N- to C-terminus: Beta-1,4-xylosyltransferase IRX9 (351 aa).

Residues 1–16 (MGSLERSKKKAQVWKK) are Cytoplasmic-facing. A helical; Signal-anchor for type II membrane protein transmembrane segment spans residues 17–36 (AVIHFSLCFVMGFFTGFAPA). At 37–351 (GKASFFSNFE…KFPTRTRLST (315 aa)) the chain is on the lumenal side. Asn64 and Asn74 each carry an N-linked (GlcNAc...) asparagine glycan. Residues 80–107 (SQSQAPAPAESREAEGETRSLSEKEDEN) form a disordered region. Basic and acidic residues predominate over residues 89–107 (ESREAEGETRSLSEKEDEN). N-linked (GlcNAc...) asparagine glycans are attached at residues Asn271 and Asn287.

Belongs to the glycosyltransferase 43 family. As to expression, expressed in developing interfascicular fibers, primary and secondary xylem in stems and developing secondary xylem in roots.

The protein localises to the golgi apparatus membrane. The catalysed reaction is [(1-&gt;4)-beta-D-xylan](n) + UDP-alpha-D-xylose = [(1-&gt;4)-beta-D-xylan](n+1) + UDP + H(+). Involved in the synthesis of the hemicellulose glucuronoxylan, a major component of secondary cell walls. Xylan xylosyltransferase that acts cooperatively with IRX14 to achieve the successive addition of xylosyl residues during xylan backbone elongation. This Arabidopsis thaliana (Mouse-ear cress) protein is Beta-1,4-xylosyltransferase IRX9.